A 296-amino-acid chain; its full sequence is 33 kDa chaperonin (296 aa).

Intrachain disulfides connect Cys238–Cys240 and Cys271–Cys274.

Belongs to the HSP33 family. Under oxidizing conditions two disulfide bonds are formed involving the reactive cysteines. Under reducing conditions zinc is bound to the reactive cysteines and the protein is inactive.

Its subcellular location is the cytoplasm. Its function is as follows. Redox regulated molecular chaperone. Protects both thermally unfolding and oxidatively damaged proteins from irreversible aggregation. Plays an important role in the bacterial defense system toward oxidative stress. The protein is 33 kDa chaperonin of Clostridium botulinum (strain Okra / Type B1).